The primary structure comprises 524 residues: Strychnine-10-hydroxylase (524 aa).

Residues 6–26 form a helical membrane-spanning segment; the sequence is LYIHTAILGLISLFLILHFVF. Heme is bound at residue Cys-466.

It belongs to the cytochrome P450 family. Requires heme as cofactor.

Its subcellular location is the membrane. It catalyses the reaction strychnine + reduced [NADPH--hemoprotein reductase] + O2 = 10-hydroxystrychnine + oxidized [NADPH--hemoprotein reductase] + H2O + H(+). The protein operates within alkaloid biosynthesis. Monooxygenase involved in the biosynthesis of curare monoterpene indole alkaloids (MIAs), natural products such as strychnine, a neurotoxic compound used as a pesticide to control rodents, and its pharmacologically active derivatives, including brucine, used to regulate blood pressure. Curare alkaloids act as animal glycine receptor antagonists. Catalyzes the conversion of strychnine to 10-OH strychnine. This Strychnos nux-vomica (Poison nut) protein is Strychnine-10-hydroxylase.